Consider the following 571-residue polypeptide: Origin recognition complex subunit 5 (571 aa).

Disordered regions lie at residues aspartate 90–aspartate 142 and glutamine 404–leucine 430. Composition is skewed to low complexity over residues asparagine 107–aspartate 133 and proline 407–lysine 416. Positions glutamine 417 to arginine 428 are enriched in basic and acidic residues.

This sequence belongs to the ORC1 family. ORC is composed of six subunits.

Its subcellular location is the nucleus. In terms of biological role, component of the origin recognition complex (ORC) that binds origins of replication. DNA-binding is ATP-dependent, however specific DNA sequences that define origins of replication have not been identified so far. ORC is required to assemble the pre-replication complex necessary to initiate DNA replication. The polypeptide is Origin recognition complex subunit 5 (orcE) (Dictyostelium discoideum (Social amoeba)).